Reading from the N-terminus, the 901-residue chain is Protein translocase subunit SecA (901 aa).

ATP-binding positions include Gln87, 105 to 109 (GEGKT), and Asp512. The interval 858–891 (SHQDDDTAAAAALAAQTGDRKVGRNDPCPCGSGK) is disordered. Zn(2+) contacts are provided by Cys885, Cys887, Cys896, and His897.

This sequence belongs to the SecA family. In terms of assembly, monomer and homodimer. Part of the essential Sec protein translocation apparatus which comprises SecA, SecYEG and auxiliary proteins SecDF-YajC and YidC. Zn(2+) serves as cofactor.

The protein resides in the cell inner membrane. Its subcellular location is the cytoplasm. It catalyses the reaction ATP + H2O + cellular proteinSide 1 = ADP + phosphate + cellular proteinSide 2.. Its function is as follows. Part of the Sec protein translocase complex. Interacts with the SecYEG preprotein conducting channel. Has a central role in coupling the hydrolysis of ATP to the transfer of proteins into and across the cell membrane, serving both as a receptor for the preprotein-SecB complex and as an ATP-driven molecular motor driving the stepwise translocation of polypeptide chains across the membrane. This is Protein translocase subunit SecA from Escherichia fergusonii (strain ATCC 35469 / DSM 13698 / CCUG 18766 / IAM 14443 / JCM 21226 / LMG 7866 / NBRC 102419 / NCTC 12128 / CDC 0568-73).